A 320-amino-acid polypeptide reads, in one-letter code: Apolipoprotein E (320 aa).

Positions 1–18 (MKVLWAALLVAFLAGCQG) are cleaved as a signal peptide. Repeat copies occupy residues 82–103 (ALMD…EQLS), 104–125 (PVAE…ARLG), 126–147 (ADME…AMLG), 148–169 (QSTE…KRLL), 170–191 (RDVD…EGAE), 192–213 (RGVS…ARAA), 214–236 (TVGS…ERLR), and 237–258 (ARME…EQVE). Residues 82–258 (ALMDETMKEL…RLDEVKEQVE (177 aa)) are 8 X 22 AA approximate tandem repeats. Met-145 carries the methionine sulfoxide modification. Phosphoserine is present on Ser-149. The tract at residues 160–170 (HLRKLRKRLLR) is LDL and other lipoprotein receptors binding. 164–167 (LRKR) provides a ligand contact to heparin. The segment at 212–293 (AATVGSSLAG…SWFEPLVEDM (82 aa)) is lipid-binding and lipoprotein association. Heparin is bound at residue 232 to 239 (GERLRARM). The tract at residues 269-320 (QQMRLQAEAFQARLKSWFEPLVEDMQRQWAGLVEKVQAAVGASAAPVPSDNH) is homooligomerization. The segment at 281-293 (RLKSWFEPLVEDM) is specificity for association with VLDL.

Belongs to the apolipoprotein A1/A4/E family. In terms of assembly, homotetramer. May interact with ABCA1; functionally associated with ABCA1 in the biogenesis of HDLs. May interact with APP/A4 amyloid-beta peptide; the interaction is extremely stable in vitro but its physiological significance is unclear. May interact with MAPT. May interact with MAP2. In the cerebrospinal fluid, interacts with secreted SORL1. Interacts with PMEL; this allows the loading of PMEL luminal fragment on ILVs to induce fibril nucleation. Post-translationally, APOE exists as multiple glycosylated and sialylated glycoforms within cells and in plasma. The extent of glycosylation and sialylation are tissue and context specific. In terms of processing, glycated in plasma VLDL. Phosphorylated by FAM20C in the extracellular medium.

The protein resides in the secreted. The protein localises to the extracellular space. Its subcellular location is the extracellular matrix. It is found in the extracellular vesicle. It localises to the endosome. The protein resides in the multivesicular body. In terms of biological role, APOE is an apolipoprotein, a protein associating with lipid particles, that mainly functions in lipoprotein-mediated lipid transport between organs via the plasma and interstitial fluids. APOE is a core component of plasma lipoproteins and is involved in their production, conversion and clearance. Apolipoproteins are amphipathic molecules that interact both with lipids of the lipoprotein particle core and the aqueous environment of the plasma. As such, APOE associates with chylomicrons, chylomicron remnants, very low density lipoproteins (VLDL) and intermediate density lipoproteins (IDL) but shows a preferential binding to high-density lipoproteins (HDL). It also binds a wide range of cellular receptors including the LDL receptor/LDLR, the LDL receptor-related proteins LRP1, LRP2 and LRP8 and the very low-density lipoprotein receptor/VLDLR that mediate the cellular uptake of the APOE-containing lipoprotein particles. Finally, APOE also has a heparin-binding activity and binds heparan-sulfate proteoglycans on the surface of cells, a property that supports the capture and the receptor-mediated uptake of APOE-containing lipoproteins by cells. A main function of APOE is to mediate lipoprotein clearance through the uptake of chylomicrons, VLDLs, and HDLs by hepatocytes. APOE is also involved in the biosynthesis by the liver of VLDLs as well as their uptake by peripheral tissues ensuring the delivery of triglycerides and energy storage in muscle, heart and adipose tissues. By participating in the lipoprotein-mediated distribution of lipids among tissues, APOE plays a critical role in plasma and tissues lipid homeostasis. APOE is also involved in two steps of reverse cholesterol transport, the HDLs-mediated transport of cholesterol from peripheral tissues to the liver, and thereby plays an important role in cholesterol homeostasis. First, it is functionally associated with ABCA1 in the biogenesis of HDLs in tissues. Second, it is enriched in circulating HDLs and mediates their uptake by hepatocytes. APOE also plays an important role in lipid transport in the central nervous system, regulating neuron survival and sprouting. The polypeptide is Apolipoprotein E (APOE) (Plecturocebus moloch (Dusky titi monkey)).